Here is a 189-residue protein sequence, read N- to C-terminus: Ribosome maturation factor RimM (189 aa).

The span at 1 to 16 (MAPSCPTRSRVWSSRT) shows a compositional bias: polar residues. Positions 1–21 (MAPSCPTRSRVWSSRTSPPPD) are disordered. Residues 118–189 (ENEFYWSDLI…TVEVDWGEDY (72 aa)) form the PRC barrel domain.

It belongs to the RimM family. In terms of assembly, binds ribosomal protein uS19.

Its subcellular location is the cytoplasm. In terms of biological role, an accessory protein needed during the final step in the assembly of 30S ribosomal subunit, possibly for assembly of the head region. Essential for efficient processing of 16S rRNA. May be needed both before and after RbfA during the maturation of 16S rRNA. It has affinity for free ribosomal 30S subunits but not for 70S ribosomes. The protein is Ribosome maturation factor RimM of Thiobacillus denitrificans (strain ATCC 25259 / T1).